Reading from the N-terminus, the 1024-residue chain is SAC3 family protein 1 (1024 aa).

Residues 1–62 form a disordered region; sequence MEKRNETGNN…QDSRQKRFSS (62 aa). A compositionally biased stretch (basic residues) spans 11-21; sequence RLKRSNNRGKS. The span at 22-38 shows a compositional bias: basic and acidic residues; that stretch reads KKDWKDASVETTPRETS. The span at 39–52 shows a compositional bias: acidic residues; it reads VDEDNTSVFEDVEA. The region spanning 243–433 is the PCI domain; that stretch reads EVEQLRKGIL…NKTAFFNDSK (191 aa). Ser-841 is modified (phosphoserine). A coiled-coil region spans residues 945–1022; the sequence is AQLEELEVVR…ARDLLKKVET (78 aa).

The protein belongs to the SAC3 family.

It is found in the cytoplasm. Its subcellular location is the nucleus envelope. The protein is SAC3 family protein 1 of Schizosaccharomyces pombe (strain 972 / ATCC 24843) (Fission yeast).